A 196-amino-acid polypeptide reads, in one-letter code: Chromophore lyase CpcT/CpeT (196 aa).

Belongs to the CpcT/CpeT biliprotein lyase family.

Functionally, covalently attaches a chromophore to Cys residue(s) of phycobiliproteins. The chain is Chromophore lyase CpcT/CpeT from Thermosynechococcus vestitus (strain NIES-2133 / IAM M-273 / BP-1).